A 94-amino-acid chain; its full sequence is Small ribosomal subunit protein uS19 (94 aa).

The protein belongs to the universal ribosomal protein uS19 family.

Its function is as follows. Protein S19 forms a complex with S13 that binds strongly to the 16S ribosomal RNA. The sequence is that of Small ribosomal subunit protein uS19 (rpsS) from Lactobacillus acidophilus (strain ATCC 700396 / NCK56 / N2 / NCFM).